The chain runs to 610 residues: T-cell immunomodulatory protein (610 aa).

A signal peptide spans 1 to 32 (MAAGRLPSARAVLAPLFLGLALLSVGPAPARA). 7 N-linked (GlcNAc...) asparagine glycosylation sites follow: N35, N123, N138, N145, N150, N175, and N241. The stretch at 98-135 (LVTSVVPGDYDGDSQMDVLLTYFPQNHTNSELGAVIFW) is one FG-GAP 1; atypical repeat. The stretch at 153-183 (FHDQPLIMDFNGDLIPDVFGITNESSQPQIL) is one FG-GAP 2; atypical repeat. Residues 256–291 (VVGQSAFADFDGDGHMDHLLPGCEDKDCQKSAIYLM) form an FG-GAP 3; atypical repeat. N-linked (GlcNAc...) asparagine glycans are attached at residues N351, N369, and N480. A helical membrane pass occupies residues 565 to 585 (VLLTAVALIGVCIFILAIIAI).

This sequence belongs to the TIP family. In terms of assembly, interacts with RUVBL1, RUVBL2 and alpha-tubulin.

It localises to the secreted. Its subcellular location is the membrane. Functionally, modulator of T-cell function. Has a protective effect in graft versus host disease model. This Mus musculus (Mouse) protein is T-cell immunomodulatory protein.